The chain runs to 360 residues: Hyaluronan and proteoglycan link protein 3 (360 aa).

A signal peptide spans M1–G17. In terms of domain architecture, Ig-like V-type spans K48 to R164. 5 disulfides stabilise this stretch: C70/C146, C188/C259, C212/C233, C286/C356, and C311/C332. 2 consecutive Link domains span residues V166–A261 and G266–R358.

Belongs to the HAPLN family. Widely expressed with highest levels in spleen and placenta.

It localises to the secreted. Its subcellular location is the extracellular space. It is found in the extracellular matrix. In terms of biological role, may function in hyaluronic acid binding. The polypeptide is Hyaluronan and proteoglycan link protein 3 (HAPLN3) (Homo sapiens (Human)).